Reading from the N-terminus, the 470-residue chain is ESX-4 secretion system ATPase EccB4 (470 aa).

A helical transmembrane segment spans residues 44-64; sequence LALGCVLAIVAAMGCAFVALL.

It belongs to the EccB family. In terms of assembly, part of the ESX-4 / type VII secretion system (T7SS), which is composed of cytosolic and membrane components.

Its subcellular location is the cell membrane. Its function is as follows. An ATPase. This is ESX-4 secretion system ATPase EccB4 (eccB4) from Mycobacterium tuberculosis (strain CDC 1551 / Oshkosh).